Here is a 371-residue protein sequence, read N- to C-terminus: Protein-tyrosine sulfotransferase 2 (371 aa).

Over 1–8 the chain is Cytoplasmic; sequence MRVTMRRV. A helical; Signal-anchor for type II membrane protein transmembrane segment spans residues 9–25; it reads LLAVGSVVALMVTLHLG. The Lumenal portion of the chain corresponds to 26-371; that stretch reads QQVLECQHVL…QVTQNTSSSH (346 aa). Residue 76–80 participates in 3'-phosphoadenylyl sulfate binding; the sequence is RSGTT. A disulfide bridge connects residues Cys-94 and Cys-154. The active-site Proton donor/acceptor is Glu-97. The tract at residues 99–103 is interaction with peptide substrate; the sequence is RIIPR. 3'-phosphoadenylyl sulfate is bound by residues Arg-181, Ser-189, and Arg-193. Cys-223 and Cys-231 form a disulfide bridge. 3'-phosphoadenylyl sulfate-binding positions include Tyr-236, 283 to 292, and Lys-298; that span reads STDQVIKPVN. 2 N-linked (GlcNAc...) asparagine glycosylation sites follow: Asn-341 and Asn-366.

Belongs to the protein sulfotransferase family.

It localises to the golgi apparatus membrane. It carries out the reaction L-tyrosyl-[protein] + 3'-phosphoadenylyl sulfate = O-sulfo-L-tyrosine-[protein] + adenosine 3',5'-bisphosphate + H(+). Functionally, catalyzes the O-sulfation of tyrosine residues within acidic motifs of polypeptides, using 3'-phosphoadenylyl sulfate (PAPS) as cosubstrate. In Gallus gallus (Chicken), this protein is Protein-tyrosine sulfotransferase 2 (TPST2).